We begin with the raw amino-acid sequence, 560 residues long: Interferon alpha/beta receptor 1 (560 aa).

Positions 1–24 (MLGLLGATTLMLVAGAPWVLPAGG) are cleaved as a signal peptide. Residues 25–437 (ADLRSPENVV…EKTKPGSTSQ (413 aa)) lie on the Extracellular side of the membrane. 4 Fibronectin type-III domains span residues 29-125 (SPEN…FQEA), 133-224 (HLEA…INTT), 231-329 (SPEN…TEMQ), and 333-433 (FPPV…TKPG). N-linked (GlcNAc...) asparagine glycosylation occurs at asparagine 55. A disulfide bridge links cysteine 76 with cysteine 84. N-linked (GlcNAc...) asparagine glycosylation is found at asparagine 85, asparagine 108, and asparagine 172. A disulfide bridge connects residues cysteine 199 and cysteine 220. 3 N-linked (GlcNAc...) asparagine glycosylation sites follow: asparagine 222, asparagine 249, and asparagine 254. Cysteine 283 and cysteine 291 are joined by a disulfide. Asparagine 313, asparagine 377, and asparagine 417 each carry an N-linked (GlcNAc...) asparagine glycan. A disulfide bridge connects residues cysteine 404 and cysteine 427. Residues 438–458 (AWLIAGILSAILLFPAVFYGV) form a helical membrane-spanning segment. At 459 to 560 (KVVSRCINYV…GEEILRQAAV (102 aa)) the chain is on the cytoplasmic side. Cysteine 464 is lipidated: S-palmitoyl cysteine. Tyrosine 467 and tyrosine 482 each carry phosphotyrosine; by TYK2. An important for interaction with TYK2 region spans residues 492–501 (LLSTSEEQTE). Residues serine 496 and serine 536 each carry the phosphoserine modification. The interval 520–560 (QIDDNHSRCSSQTNRDSGVYSNEDENSGSKIGEEILRQAAV) is disordered. Polar residues predominate over residues 527–539 (RCSSQTNRDSGVY). A compositionally biased stretch (basic and acidic residues) spans 550–560 (IGEEILRQAAV).

The protein belongs to the type II cytokine receptor family. Heterodimer with IFNAR2; forming the receptor for type I interferon. Interacts with TYK2. Interacts with STAT1 and STAT2; the interaction requires its phosphorylation at Tyr-482. Interacts (serine-phosphorylated form) with FBXW11, the substrate recognition component of a SCF (SKP1-CUL1-F-box protein) E3 ubiquitin-protein ligase complex. Interacts with SHMT2; this promotes interaction with ABRAXAS2 and the BRISC complex. Interacts with TRIM10; this interaction prevents association between IFNAR1 and TYK2. Ubiquitinated, leading to its internalization and degradation. Polyubiquitinated via 'Lys-48'-linked and 'Lys-63'-linked ubiquitin chains, leading to receptor internalization and lysosomal degradation. The 'Lys-63'-linked ubiquitin chains are cleaved off by the BRISC complex. Post-translationally, phosphorylated on tyrosine residues in response to interferon-binding: phosphorylation by TYK2 tyrosine kinase creates docking sites for STAT proteins. Phosphorylated on serine residues in response to interferon binding; this promotes interaction with FBXW11 and ubiquitination. In terms of processing, palmitoylation at Cys-464 is required for the activation of STAT1 and STAT2.

The protein localises to the cell membrane. Its subcellular location is the late endosome. It is found in the lysosome. In terms of biological role, together with IFNAR2, forms the heterodimeric receptor for type I interferons (including interferons alpha, beta, epsilon, omega and kappa). Type I interferon binding activates the JAK-STAT signaling cascade, resulting in transcriptional activation or repression of interferon-regulated genes that encode the effectors of the interferon response. Mechanistically, type I interferon-binding brings the IFNAR1 and IFNAR2 subunits into close proximity with one another, driving their associated Janus kinases (JAKs) (TYK2 bound to IFNAR1 and JAK1 bound to IFNAR2) to cross-phosphorylate one another. The activated kinases phosphorylate specific tyrosine residues on the intracellular domains of IFNAR1 and IFNAR2, forming docking sites for the STAT transcription factors. STAT proteins are then phosphorylated by the JAKs, promoting their translocation into the nucleus to regulate expression of interferon-regulated genes. Can also act independently of IFNAR2: form an active IFNB1 receptor by itself and activate a signaling cascade that does not involve activation of the JAK-STAT pathway. This chain is Interferon alpha/beta receptor 1 (IFNAR1), found in Sus scrofa (Pig).